A 401-amino-acid chain; its full sequence is Probable tRNA sulfurtransferase (401 aa).

The 106-residue stretch at 63-168 (TTAEQALSYL…EREAFLYGAR (106 aa)) folds into the THUMP domain. ATP contacts are provided by residues 186–187 (LL), 211–212 (YF), arginine 268, glycine 290, and glutamine 299.

It belongs to the ThiI family.

The protein localises to the cytoplasm. It carries out the reaction [ThiI sulfur-carrier protein]-S-sulfanyl-L-cysteine + a uridine in tRNA + 2 reduced [2Fe-2S]-[ferredoxin] + ATP + H(+) = [ThiI sulfur-carrier protein]-L-cysteine + a 4-thiouridine in tRNA + 2 oxidized [2Fe-2S]-[ferredoxin] + AMP + diphosphate. The catalysed reaction is [ThiS sulfur-carrier protein]-C-terminal Gly-Gly-AMP + S-sulfanyl-L-cysteinyl-[cysteine desulfurase] + AH2 = [ThiS sulfur-carrier protein]-C-terminal-Gly-aminoethanethioate + L-cysteinyl-[cysteine desulfurase] + A + AMP + 2 H(+). It functions in the pathway cofactor biosynthesis; thiamine diphosphate biosynthesis. Its function is as follows. Catalyzes the ATP-dependent transfer of a sulfur to tRNA to produce 4-thiouridine in position 8 of tRNAs, which functions as a near-UV photosensor. Also catalyzes the transfer of sulfur to the sulfur carrier protein ThiS, forming ThiS-thiocarboxylate. This is a step in the synthesis of thiazole, in the thiamine biosynthesis pathway. The sulfur is donated as persulfide by IscS. This Treponema pallidum (strain Nichols) protein is Probable tRNA sulfurtransferase.